The primary structure comprises 397 residues: Iripin-2 (397 aa).

The N-terminal stretch at 1 to 21 is a signal peptide; it reads MEDFKMKTLAAFLSLLVLCWA. N-linked (GlcNAc...) asparagine glycans are attached at residues N109 and N270.

It belongs to the serpin family. Interacts with mouse MCPT4. Female salivary gland. Ovary. Midgut.

It is found in the secreted. Functionally, serine protease inhibitor that modulates blood feeding of ticks on vertebrate species. Inhibits host trypsin, thrombin (F2), alpha-chymotrypsin, cathepsin G (CTSG) and mast cell chymase (CMA1). Inhibits host cathepsin G- and thrombin-induced platelet aggregation. Inhibits acute inflammation in the host. Suppresses neutrophil recruitment in inflamed area. Does not inhibit host plasmin (PLG), factor Xa (F10), factor XIa (F11), elastase and proteinase 3/myeloblastin (PRTN3). (Microbial infection) Inhibits IL6 production by mouse splenic dendritic cells in response to Borrelia burgdorferi exposure. Decreases levels of STAT3 phosphorylation in mouse splenic dendritic cells in response to Borrelia burgdorferi exposure and in Borrelia-primed CD4+ T-lymphocytes. Inhibits differentiation of mouse Th17 cells, a subset of CD4+ T-lymphocytes that play a crucial role in protection against extracellular bacteria, in response to Borrelia burgdorferi exposure via inhibition of the IL6/STAT3 signaling pathway. This is Iripin-2 from Ixodes ricinus (Common tick).